The sequence spans 141 residues: Large ribosomal subunit protein uL11 (141 aa).

It belongs to the universal ribosomal protein uL11 family. As to quaternary structure, part of the ribosomal stalk of the 50S ribosomal subunit. Interacts with L10 and the large rRNA to form the base of the stalk. L10 forms an elongated spine to which L12 dimers bind in a sequential fashion forming a multimeric L10(L12)X complex. In terms of processing, one or more lysine residues are methylated.

Forms part of the ribosomal stalk which helps the ribosome interact with GTP-bound translation factors. This chain is Large ribosomal subunit protein uL11, found in Alkaliphilus metalliredigens (strain QYMF).